Consider the following 174-residue polypeptide: Crossover junction endodeoxyribonuclease RuvC (174 aa).

Residues aspartate 8, glutamate 67, and aspartate 139 contribute to the active site. Mg(2+) is bound by residues aspartate 8, glutamate 67, and aspartate 139.

This sequence belongs to the RuvC family. As to quaternary structure, homodimer which binds Holliday junction (HJ) DNA. The HJ becomes 2-fold symmetrical on binding to RuvC with unstacked arms; it has a different conformation from HJ DNA in complex with RuvA. In the full resolvosome a probable DNA-RuvA(4)-RuvB(12)-RuvC(2) complex forms which resolves the HJ. Mg(2+) is required as a cofactor.

It localises to the cytoplasm. It carries out the reaction Endonucleolytic cleavage at a junction such as a reciprocal single-stranded crossover between two homologous DNA duplexes (Holliday junction).. Its function is as follows. The RuvA-RuvB-RuvC complex processes Holliday junction (HJ) DNA during genetic recombination and DNA repair. Endonuclease that resolves HJ intermediates. Cleaves cruciform DNA by making single-stranded nicks across the HJ at symmetrical positions within the homologous arms, yielding a 5'-phosphate and a 3'-hydroxyl group; requires a central core of homology in the junction. The consensus cleavage sequence is 5'-(A/T)TT(C/G)-3'. Cleavage occurs on the 3'-side of the TT dinucleotide at the point of strand exchange. HJ branch migration catalyzed by RuvA-RuvB allows RuvC to scan DNA until it finds its consensus sequence, where it cleaves and resolves the cruciform DNA. The protein is Crossover junction endodeoxyribonuclease RuvC of Pseudomonas paraeruginosa (strain DSM 24068 / PA7) (Pseudomonas aeruginosa (strain PA7)).